We begin with the raw amino-acid sequence, 601 residues long: Glutathione-regulated potassium-efflux system protein KefB (601 aa).

Transmembrane regions (helical) follow at residues 4-24 (SDFL…VPLA), 29-49 (IGAV…GLGF), 55-75 (EILH…GLEL), 87-107 (IFGV…GLLM), 115-135 (AAVV…LQLM), 152-172 (VLLF…LLAG), 177-197 (HFDW…LIGG), 207-227 (FIAA…LVLG), 230-250 (LFMD…GVLL), 268-288 (GLLL…GVLY), 291-311 (LLWV…VLYL), 324-344 (MQFA…FSTA), and 356-376 (ALLL…MKLV). Positions 400-519 (KPQVIVVGFG…AGVTQFSRET (120 aa)) constitute an RCK N-terminal domain.

It belongs to the monovalent cation:proton antiporter 2 (CPA2) transporter (TC 2.A.37) family. KefB subfamily. In terms of assembly, interacts with the regulatory subunit KefG.

The protein localises to the cell inner membrane. Its function is as follows. Pore-forming subunit of a potassium efflux system that confers protection against electrophiles. Catalyzes K(+)/H(+) antiport. This Escherichia coli O139:H28 (strain E24377A / ETEC) protein is Glutathione-regulated potassium-efflux system protein KefB.